We begin with the raw amino-acid sequence, 461 residues long: Vitamin K-dependent protein C (461 aa).

The first 18 residues, 1-18, serve as a signal peptide directing secretion; sequence MWQLTSLLLFVATWGISG. The O-linked (GalNAc...) threonine glycan is linked to Thr19. A propeptide spanning residues 19–42 is cleaved from the precursor; sequence TPAPLDSVFSSSERAHQVLRIRKR. Residues 43-88 enclose the Gla domain; that stretch reads ANSFLEELRHSSLERECIEEICDFEEAKEIFQNVDDTLAFWSKHVD. 4-carboxyglutamate occurs at positions 48, 49, 56, 58, 61, 62, 67, 68, and 71. Cysteines 59 and 64 form a disulfide. 4 cysteine pairs are disulfide-bonded: Cys92/Cys111, Cys101/Cys106, Cys105/Cys120, and Cys122/Cys131. 2 consecutive EGF-like domains span residues 97-132 and 136-176; these read LEHP…RFCQ and SFLN…LQCH. Position 113 is a (3R)-3-hydroxyaspartate (Asp113). N-linked (GlcNAc...) asparagine glycosylation occurs at Asn139. Intrachain disulfides connect Cys140–Cys151, Cys147–Cys160, Cys162–Cys175, Cys183–Cys319, and Cys238–Cys254. A Peptidase S1 domain is found at 212-450; sequence LIDGKMTRRG…YLDWIHGHIR (239 aa). His253 acts as the Charge relay system in catalysis. N-linked (GlcNAc...) asparagine glycosylation occurs at Asn290. Residue Asp299 is the Charge relay system of the active site. A Phosphoserine; by FAM20C modification is found at Ser347. Asn355 carries an N-linked (GlcNAc...) asparagine glycan. An N-linked (GlcNAc...) asparagine; atypical; partial glycan is attached at Asn371. 2 cysteine pairs are disulfide-bonded: Cys373–Cys387 and Cys398–Cys426. The active-site Charge relay system is Ser402.

This sequence belongs to the peptidase S1 family. Synthesized as a single chain precursor, which is cleaved into a light chain and a heavy chain held together by a disulfide bond. The enzyme is then activated by thrombin, which cleaves a tetradecapeptide from the amino end of the heavy chain; this reaction, which occurs at the surface of endothelial cells, is strongly promoted by thrombomodulin. Interacts (activated) with iripin-8, a serine protease inhibitor from Ixodes ricinus saliva. In terms of processing, the vitamin K-dependent, enzymatic carboxylation of some Glu residues allows the modified protein to bind calcium. Post-translationally, N- and O-glycosylated. Partial (70%) N-glycosylation of Asn-371 with an atypical N-X-C site produces a higher molecular weight form referred to as alpha. The lower molecular weight form, not N-glycosylated at Asn-371, is beta. O-glycosylated with core 1 or possibly core 8 glycans. The iron and 2-oxoglutarate dependent 3-hydroxylation of aspartate and asparagine is (R) stereospecific within EGF domains. In terms of processing, may be phosphorylated on a Ser or Thr in a region (AA 25-30) of the propeptide. As to expression, plasma; synthesized in the liver.

It is found in the secreted. Its subcellular location is the golgi apparatus. The protein resides in the endoplasmic reticulum. It carries out the reaction Degradation of blood coagulation factors Va and VIIIa.. Protein C is a vitamin K-dependent serine protease that regulates blood coagulation by inactivating factors Va and VIIIa in the presence of calcium ions and phospholipids. Exerts a protective effect on the endothelial cell barrier function. The sequence is that of Vitamin K-dependent protein C (PROC) from Homo sapiens (Human).